A 67-amino-acid chain; its full sequence is DNA-directed RNA polymerases I, II, and III subunit RPABC5 (67 aa).

Zn(2+)-binding residues include Cys7, Cys10, Cys44, and Cys45.

This sequence belongs to the archaeal Rpo10/eukaryotic RPB10 RNA polymerase subunit family. As to quaternary structure, component of the RNA polymerase I (Pol I), RNA polymerase II (Pol II) and RNA polymerase III (Pol III) complexes consisting of at least 13, 12 and 17 subunits, respectively.

It is found in the nucleus. Its function is as follows. DNA-dependent RNA polymerase catalyzes the transcription of DNA into RNA using the four ribonucleoside triphosphates as substrates. Common component of RNA polymerases I, II and III which synthesize ribosomal RNA precursors, mRNA precursors and many functional non-coding RNAs, and a small RNAs, such as 5S rRNA and tRNAs, respectively. Pol II is the central component of the basal RNA polymerase II transcription machinery. Pols are composed of mobile elements that move relative to each other. In Pol II, RBP10 is part of the core element with the central large cleft. This Caenorhabditis briggsae protein is DNA-directed RNA polymerases I, II, and III subunit RPABC5.